Reading from the N-terminus, the 127-residue chain is Large ribosomal subunit protein bL19 (127 aa).

This sequence belongs to the bacterial ribosomal protein bL19 family.

In terms of biological role, this protein is located at the 30S-50S ribosomal subunit interface and may play a role in the structure and function of the aminoacyl-tRNA binding site. In Jannaschia sp. (strain CCS1), this protein is Large ribosomal subunit protein bL19.